The sequence spans 253 residues: 5'/3'-nucleotidase SurE (253 aa).

Positions 8, 9, 39, and 92 each coordinate a divalent metal cation.

The protein belongs to the SurE nucleotidase family. A divalent metal cation serves as cofactor.

Its subcellular location is the cytoplasm. It carries out the reaction a ribonucleoside 5'-phosphate + H2O = a ribonucleoside + phosphate. The enzyme catalyses a ribonucleoside 3'-phosphate + H2O = a ribonucleoside + phosphate. It catalyses the reaction [phosphate](n) + H2O = [phosphate](n-1) + phosphate + H(+). Its function is as follows. Nucleotidase with a broad substrate specificity as it can dephosphorylate various ribo- and deoxyribonucleoside 5'-monophosphates and ribonucleoside 3'-monophosphates with highest affinity to 3'-AMP. Also hydrolyzes polyphosphate (exopolyphosphatase activity) with the preference for short-chain-length substrates (P20-25). Might be involved in the regulation of dNTP and NTP pools, and in the turnover of 3'-mononucleotides produced by numerous intracellular RNases (T1, T2, and F) during the degradation of various RNAs. The polypeptide is 5'/3'-nucleotidase SurE (Salmonella arizonae (strain ATCC BAA-731 / CDC346-86 / RSK2980)).